The chain runs to 156 residues: Small ribosomal subunit protein uS7 (156 aa).

Belongs to the universal ribosomal protein uS7 family. In terms of assembly, part of the 30S ribosomal subunit. Contacts proteins S9 and S11.

Its function is as follows. One of the primary rRNA binding proteins, it binds directly to 16S rRNA where it nucleates assembly of the head domain of the 30S subunit. Is located at the subunit interface close to the decoding center, probably blocks exit of the E-site tRNA. This Nitrosomonas eutropha (strain DSM 101675 / C91 / Nm57) protein is Small ribosomal subunit protein uS7.